Reading from the N-terminus, the 237-residue chain is tRNA (guanine-N(7)-)-methyltransferase (237 aa).

Residues E67, E92, D119, and D141 each contribute to the S-adenosyl-L-methionine site. D141 is a catalytic residue. Substrate-binding positions include K145, D177, and 214–217; that span reads TRYE.

The protein belongs to the class I-like SAM-binding methyltransferase superfamily. TrmB family.

The enzyme catalyses guanosine(46) in tRNA + S-adenosyl-L-methionine = N(7)-methylguanosine(46) in tRNA + S-adenosyl-L-homocysteine. It functions in the pathway tRNA modification; N(7)-methylguanine-tRNA biosynthesis. Its function is as follows. Catalyzes the formation of N(7)-methylguanine at position 46 (m7G46) in tRNA. The sequence is that of tRNA (guanine-N(7)-)-methyltransferase from Jannaschia sp. (strain CCS1).